The sequence spans 187 residues: Cytochrome b-245 chaperone 1 (187 aa).

A helical transmembrane segment spans residues 20-42 (GIRSWSLLVGILSTGLAAAYYSG). Residues 167–187 (ESPSERSQSSDSEPDGPGGQS) form a disordered region. A phosphoserine mark is found at Ser-168 and Ser-170.

The protein belongs to the CYBC1 family. Interacts with CYBB; CYBC1 may act as a chaperone stabilizing Cytochrome b-245 heterodimer.

It is found in the endoplasmic reticulum membrane. Its function is as follows. Functions as a chaperone necessary for a stable expression of the CYBA and CYBB subunits of the cytochrome b-245 heterodimer. Controls the phagocyte respiratory burst and is essential for innate immunity. The sequence is that of Cytochrome b-245 chaperone 1 from Mus musculus (Mouse).